Here is a 1032-residue protein sequence, read N- to C-terminus: Importin beta-like protein KAP120 (1032 aa).

Position 2 is an N-acetylalanine (Ala2). The Importin N-terminal domain occupies 31–103; the sequence is AEQQLRQWET…RGRLFEMIDE (73 aa).

Belongs to the importin beta family. Interacts with GTP-bound GSP1 and RFP1. Associates with the nuclear pore complex.

It localises to the cytoplasm. Its subcellular location is the nucleus. Functionally, functions in nuclear protein import as nuclear transport receptor. Serves as receptor for nuclear localization signals (NLS) in cargo substrates. Thought to mediate docking of the importin/substrate complex to the nuclear pore complex (NPC) through binding to nucleoporin and the complex is subsequently translocated through the pore by an energy requiring, RAN-dependent mechanism. Required for nuclear import of Ho endonuclease and RFP1, and involved in rRNA-processing and assembly or export of 60S ribosomal subunits. This is Importin beta-like protein KAP120 (KAP120) from Saccharomyces cerevisiae (strain ATCC 204508 / S288c) (Baker's yeast).